We begin with the raw amino-acid sequence, 216 residues long: Redox-sensing transcriptional repressor Rex (216 aa).

Residues 20–59 (QYYRLFKSLVEENVTRTNSQLISEKIGVDAATIRRDFSLF) constitute a DNA-binding region (H-T-H motif). 94 to 99 (GVGNLG) provides a ligand contact to NAD(+).

It belongs to the transcriptional regulatory Rex family. As to quaternary structure, homodimer.

The protein localises to the cytoplasm. In terms of biological role, modulates transcription in response to changes in cellular NADH/NAD(+) redox state. This Lactococcus lactis subsp. lactis (strain IL1403) (Streptococcus lactis) protein is Redox-sensing transcriptional repressor Rex.